A 485-amino-acid polypeptide reads, in one-letter code: Probable glycine dehydrogenase (decarboxylating) subunit 2 (485 aa).

Lys269 carries the post-translational modification N6-(pyridoxal phosphate)lysine.

Belongs to the GcvP family. C-terminal subunit subfamily. As to quaternary structure, the glycine cleavage system is composed of four proteins: P, T, L and H. In this organism, the P 'protein' is a heterodimer of two subunits. Pyridoxal 5'-phosphate serves as cofactor.

The catalysed reaction is N(6)-[(R)-lipoyl]-L-lysyl-[glycine-cleavage complex H protein] + glycine + H(+) = N(6)-[(R)-S(8)-aminomethyldihydrolipoyl]-L-lysyl-[glycine-cleavage complex H protein] + CO2. The glycine cleavage system catalyzes the degradation of glycine. The P protein binds the alpha-amino group of glycine through its pyridoxal phosphate cofactor; CO(2) is released and the remaining methylamine moiety is then transferred to the lipoamide cofactor of the H protein. The protein is Probable glycine dehydrogenase (decarboxylating) subunit 2 of Chlorobium phaeovibrioides (strain DSM 265 / 1930) (Prosthecochloris vibrioformis (strain DSM 265)).